The primary structure comprises 325 residues: Myo-inositol dehydrogenase Hyg17 (325 aa).

It belongs to the Gfo/Idh/MocA family.

It carries out the reaction myo-inositol + NAD(+) = myo-inosose-5 + NADH + H(+). The protein operates within antibiotic biosynthesis. In terms of biological role, dehydrogenase involved in the biosynthesis of the aminocyclitol moiety of hygromycin A, a broad-spectrum antibiotic. Catalyzes the NAD(+)-dependent oxidation of myo-inositol to myo-inosose-5 (neo-inosose). Shows reduced activity with scyllo-inositol, minimal activity with L-chiro-inositol and no activity with D-glucose, D-chiro-inositol, epi-inositol, muco-inositol and allo-inositol. Is specific for NAD(+) and cannot use NADP(+). This chain is Myo-inositol dehydrogenase Hyg17, found in Streptomyces leeuwenhoekii.